A 657-amino-acid chain; its full sequence is Translation factor GUF1, mitochondrial (657 aa).

The N-terminal 39 residues, 1–39, are a transit peptide targeting the mitochondrion; the sequence is MRGCLQSVKWLTSALRPSQSLASSTRYPRRLLSTSAPRN. Residues 59 to 239 form the tr-type G domain; sequence ERFRNFCIVA…TVIEQIPAPV (181 aa). Residues 121-128, 185-189, and 239-242 each bind GTP; these read HQGEDYLL, INKVD, and VGDR.

Belongs to the TRAFAC class translation factor GTPase superfamily. Classic translation factor GTPase family. LepA subfamily.

Its subcellular location is the mitochondrion inner membrane. It carries out the reaction GTP + H2O = GDP + phosphate + H(+). Its function is as follows. Promotes mitochondrial protein synthesis. May act as a fidelity factor of the translation reaction, by catalyzing a one-codon backward translocation of tRNAs on improperly translocated ribosomes. Binds to mitochondrial ribosomes in a GTP-dependent manner. The polypeptide is Translation factor GUF1, mitochondrial (Ajellomyces capsulatus (strain H143) (Darling's disease fungus)).